We begin with the raw amino-acid sequence, 812 residues long: Phospholipase D alpha 2 (812 aa).

Positions 1–36 (MAQHLLHGTLHATIYEVDALHTGGLRSAGFLGKIIS) are excised as a propeptide. The 127-residue stretch at 1 to 127 (MAQHLLHGTL…INGEEVEKWV (127 aa)) folds into the C2 domain. The PLD phosphodiesterase 1 domain occupies 328–368 (AMFTHHQKIVVVDSEVPSQGGGSEMRRIMSFVGGIDLCDGR). Catalysis depends on residues H333, K335, and D340. H333 contributes to the a 1,2-diacyl-sn-glycero-3-phosphate binding site. Ca(2+) is bound at residue H374. Residues Q524 and H663 each coordinate a 1,2-diacyl-sn-glycero-3-phosphate. A PLD phosphodiesterase 2 domain is found at 658-685 (FMIYVHSKMMIVDDEYIIVGSANINQRS). Residues H663, K665, and D670 contribute to the active site. Residue E724 participates in Ca(2+) binding.

This sequence belongs to the phospholipase D family. C2-PLD subfamily. Requires Ca(2+) as cofactor.

It is found in the cytoplasm. The protein resides in the membrane. It carries out the reaction a 1,2-diacyl-sn-glycero-3-phosphocholine + H2O = a 1,2-diacyl-sn-glycero-3-phosphate + choline + H(+). Hydrolyzes glycerol-phospholipids at the terminal phosphodiesteric bond. Plays an important role in various cellular processes, including phytohormone action, vesicular trafficking, secretion, cytoskeletal arrangement, meiosis, tumor promotion, pathogenesis, membrane deterioration and senescence. The sequence is that of Phospholipase D alpha 2 (PLD2) from Brassica oleracea var. capitata (Cabbage).